The chain runs to 178 residues: Bifunctional protein PyrR (178 aa).

The PRPP-binding signature appears at valine 99–threonine 111.

The protein belongs to the purine/pyrimidine phosphoribosyltransferase family. PyrR subfamily. In terms of assembly, homodimer and homohexamer; in equilibrium.

The enzyme catalyses UMP + diphosphate = 5-phospho-alpha-D-ribose 1-diphosphate + uracil. In terms of biological role, regulates transcriptional attenuation of the pyrimidine nucleotide (pyr) operon by binding in a uridine-dependent manner to specific sites on pyr mRNA. This disrupts an antiterminator hairpin in the RNA and favors formation of a downstream transcription terminator, leading to a reduced expression of downstream genes. Functionally, also displays a weak uracil phosphoribosyltransferase activity which is not physiologically significant. This chain is Bifunctional protein PyrR, found in Thermoanaerobacter pseudethanolicus (strain ATCC 33223 / 39E) (Clostridium thermohydrosulfuricum).